The primary structure comprises 21 residues: Venom peptide Ocy4 (21 aa).

Expressed by the venom gland.

It localises to the secreted. The polypeptide is Venom peptide Ocy4 (Opisthacanthus cayaporum (South American scorpion)).